The following is a 408-amino-acid chain: Putative ankyrin repeat protein L483 (408 aa).

ANK repeat units lie at residues 78–107 (SLNKCLIKSCKKNKLNIIKYLVSLGADIKA), 108–137 (GDDCAVQLASQNGHLEVIEYLVAQGANIRA), 139–167 (NDYAVIWASRNGYLDIVKYLVSQGADIRA), 168–197 (NNDYAVRWASRNGHLKVVKYLVSLGANIRT), 198–227 (ENDYAIKYASENGYLRIVEYLVSQGADIRA), 229–257 (NDYAVGLASSNGHFEVVEYLVSQGANIRV), 259–287 (NDYAVRLASSNGHLEVVKYLVSLRANIRA), 288–317 (RCDFAIKWSSSNGHLEVVKYLVSQGADIRS), 318–347 (QNDYAVRYASTNGHLEVVKYLVGQGADIRT), 349–377 (DDYAVRWASRGGCLEVVKYLVDQGANIRA), and 378–407 (KDDYAVKWASEKGHLEIVKFLISQGAVLTK).

This is Putative ankyrin repeat protein L483 from Acanthamoeba polyphaga (Amoeba).